The sequence spans 180 residues: Shikimate kinase (180 aa).

14–19 (GAGKTC) serves as a coordination point for ATP. Residue Thr18 participates in Mg(2+) binding. Substrate-binding residues include Asp36, Arg60, and Gly82. Arg120 is a binding site for ATP. Arg139 serves as a coordination point for substrate.

The protein belongs to the shikimate kinase family. As to quaternary structure, monomer. Requires Mg(2+) as cofactor.

The protein localises to the cytoplasm. The enzyme catalyses shikimate + ATP = 3-phosphoshikimate + ADP + H(+). Its pathway is metabolic intermediate biosynthesis; chorismate biosynthesis; chorismate from D-erythrose 4-phosphate and phosphoenolpyruvate: step 5/7. Its function is as follows. Catalyzes the specific phosphorylation of the 3-hydroxyl group of shikimic acid using ATP as a cosubstrate. In Stenotrophomonas maltophilia (strain K279a), this protein is Shikimate kinase.